A 145-amino-acid chain; its full sequence is D-aminoacyl-tRNA deacylase (145 aa).

The Gly-cisPro motif, important for rejection of L-amino acids motif lies at Gly-137–Pro-138.

It belongs to the DTD family. In terms of assembly, homodimer.

The protein localises to the cytoplasm. It carries out the reaction glycyl-tRNA(Ala) + H2O = tRNA(Ala) + glycine + H(+). The catalysed reaction is a D-aminoacyl-tRNA + H2O = a tRNA + a D-alpha-amino acid + H(+). Its function is as follows. An aminoacyl-tRNA editing enzyme that deacylates mischarged D-aminoacyl-tRNAs. Also deacylates mischarged glycyl-tRNA(Ala), protecting cells against glycine mischarging by AlaRS. Acts via tRNA-based rather than protein-based catalysis; rejects L-amino acids rather than detecting D-amino acids in the active site. By recycling D-aminoacyl-tRNA to D-amino acids and free tRNA molecules, this enzyme counteracts the toxicity associated with the formation of D-aminoacyl-tRNA entities in vivo and helps enforce protein L-homochirality. The sequence is that of D-aminoacyl-tRNA deacylase from Salmonella arizonae (strain ATCC BAA-731 / CDC346-86 / RSK2980).